We begin with the raw amino-acid sequence, 637 residues long: Protein arginine N-methyltransferase 5 (637 aa).

Ala-2 carries the N-acetylalanine modification. The segment at 13 to 292 (RVSSGRDLNC…YLEYLSQNRP (280 aa)) is TIM barrel. The SAM-dependent MTase PRMT-type domain maps to 308–615 (LQSPLQPLMD…SNSKKVWYEW (308 aa)). Tyr-324 is a binding site for S-adenosyl-L-methionine. Phe-327 serves as a coordination point for a protein. S-adenosyl-L-methionine is bound by residues 333 to 334 (KY), Glu-392, and 419 to 420 (DM). Residues Glu-435 and Glu-444 each coordinate a protein. Residues Glu-435 and Glu-444 each act as proton donor/acceptor in the active site. The interval 465-637 (PGEYTSFLAP…PTGRSYTIGL (173 aa)) is beta barrel. The segment at 488–494 (REKDRDP) is dimerization.

It belongs to the class I-like SAM-binding methyltransferase superfamily. Protein arginine N-methyltransferase family. Forms, at least, homodimers and homotetramers. Component of the methylosome complex, composed of PRMT5, WDR77 and CLNS1A. Found in a complex composed of PRMT5, WDR77 and RIOK1. RIOK1 and CLNS1A associate with PRMT5 in a mutually exclusive fashion, which allows the recruitment of distinct methylation substrates, such as nucleolin/NCL and Sm proteins, respectively. Interacts with PRDM1. Identified in a complex composed of methylosome and PRMT1 and ERH. Interacts with EGFR; methylates EGFR and stimulates EGFR-mediated ERK activation. Interacts with HOXA9. Interacts with SRGAP2. Found in a complex with COPRS, RUNX1 and CBFB. Interacts with CHTOP; the interaction symmetrically methylates CHTOP, but seems to require the presence of PRMT1. Interacts with EPB41L3; this modulates methylation of target proteins. Component of a high molecular weight E2F-pocket protein complex, CERC (cyclin E1 repressor complex). Associates with SWI/SNF remodeling complexes containing SMARCA2 and SMARCA4. Interacts with JAK2, SSTR1, SUPT5H, BRAF and with active RAF1. Interacts with LSM11, PRMT7 and SNRPD3. Interacts with COPRS; promoting its recruitment on histone H4. Interacts with CLNS1A/pICln. Identified in a complex with CLNS1A/pICln and Sm proteins. Interacts with RPS10. Interacts with WDR77. Interacts with IWS1. Interacts with CRY1. Interacts with POLR2A. Interacts with SMN1/SMN2. Interacts with LYAR; this interaction is direct. Interacts with TTC5/STRAP; this interaction is DNA damage-dependent and promotes PRMT5 interaction with p53/TP53. Interacts with p53/TP53 in response to DNA damage; the interaction is TTC5/STRAP dependent. Interacts with FAM47E; the interaction is direct, promotes PRMT5 localization to chromatin, and does not disrupt its association with WDR77 or STUB1. Interacts with TDRD6. Interacts with STUB1. Interacts with MBD2. Does not interact with MBD3.

Its subcellular location is the cytoplasm. The protein resides in the nucleus. It localises to the golgi apparatus. It catalyses the reaction L-arginyl-[protein] + 2 S-adenosyl-L-methionine = N(omega),N(omega)'-dimethyl-L-arginyl-[protein] + 2 S-adenosyl-L-homocysteine + 2 H(+). Its activity is regulated as follows. Activity is increased by EGF, HGF, FGF1 or FGF2 treatments, and slightly decreased by NGF treatment. In terms of biological role, arginine methyltransferase that can both catalyze the formation of omega-N monomethylarginine (MMA) and symmetrical dimethylarginine (sDMA), with a preference for the formation of MMA. Specifically mediates the symmetrical dimethylation of arginine residues in the small nuclear ribonucleoproteins Sm D1 (SNRPD1) and Sm D3 (SNRPD3); such methylation being required for the assembly and biogenesis of snRNP core particles. Methylates SUPT5H and may regulate its transcriptional elongation properties. May methylate the N-terminal region of MBD2. Mono- and dimethylates arginine residues of myelin basic protein (MBP) in vitro. May play a role in cytokine-activated transduction pathways. Negatively regulates cyclin E1 promoter activity and cellular proliferation. Methylates histone H2A and H4 'Arg-3' during germ cell development. Methylates histone H3 'Arg-8', which may repress transcription. Methylates the Piwi proteins (PIWIL1, PIWIL2 and PIWIL4), methylation of Piwi proteins being required for the interaction with Tudor domain-containing proteins and subsequent localization to the meiotic nuage. Methylates RPS10. Attenuates EGF signaling through the MAPK1/MAPK3 pathway acting at 2 levels. First, monomethylates EGFR; this enhances EGFR 'Tyr-1197' phosphorylation and PTPN6 recruitment, eventually leading to reduced SOS1 phosphorylation. Second, methylates RAF1 and probably BRAF, hence destabilizing these 2 signaling proteins and reducing their catalytic activity. Required for induction of E-selectin and VCAM-1, on the endothelial cells surface at sites of inflammation. Methylates HOXA9. Methylates and regulates SRGAP2 which is involved in cell migration and differentiation. Acts as a transcriptional corepressor in CRY1-mediated repression of the core circadian component PER1 by regulating the H4R3 dimethylation at the PER1 promoter. Methylates GM130/GOLGA2, regulating Golgi ribbon formation. Methylates H4R3 in genes involved in glioblastomagenesis in a CHTOP- and/or TET1-dependent manner. Symmetrically methylates POLR2A, a modification that allows the recruitment to POLR2A of proteins including SMN1/SMN2 and SETX. This is required for resolving RNA-DNA hybrids created by RNA polymerase II, that form R-loop in transcription terminal regions, an important step in proper transcription termination. Along with LYAR, binds the promoter of gamma-globin HBG1/HBG2 and represses its expression. Symmetrically methylates NCL. Methylates p53/TP53; methylation might possibly affect p53/TP53 target gene specificity. Involved in spliceosome maturation and mRNA splicing in prophase I spermatocytes through the catalysis of the symmetrical arginine dimethylation of SNRPB (small nuclear ribonucleoprotein-associated protein) and the interaction with tudor domain-containing protein TDRD6. In Mus musculus (Mouse), this protein is Protein arginine N-methyltransferase 5 (Prmt5).